The chain runs to 100 residues: MELTPREKDKLLIFTAALLAERRKARGLKLNHPEAVALISAAIMEGARDGKTVAELMSAGRTLLSRADVMEGIAEMIPDIQVEATFPDGSKLVTVHQPIV.

It belongs to the urease gamma subunit family. In terms of assembly, heterotrimer of UreA (gamma), UreB (beta) and UreC (alpha) subunits. Three heterotrimers associate to form the active enzyme.

It is found in the cytoplasm. The enzyme catalyses urea + 2 H2O + H(+) = hydrogencarbonate + 2 NH4(+). The protein operates within nitrogen metabolism; urea degradation; CO(2) and NH(3) from urea (urease route): step 1/1. The polypeptide is Urease subunit gamma (Verminephrobacter eiseniae (strain EF01-2)).